Here is a 290-residue protein sequence, read N- to C-terminus: UPF0761 membrane protein YihY (290 aa).

A run of 6 helical transmembrane segments spans residues 44 to 64, 104 to 124, 140 to 160, 183 to 203, 210 to 230, and 244 to 264; these read LLSLVPLVAVVFALFAAFPMF, VGACGLIVTALLLMYSIDSAL, FAVYWMILTLGPLLAGASLAI, IFPLLLSWISFWLLYSIVPTI, AIVGAFVAALLFEAGKKGFAL, and VLAVIPILFVWVYWTWCIVLL.

The protein belongs to the UPF0761 family.

It is found in the cell inner membrane. This Escherichia coli O127:H6 (strain E2348/69 / EPEC) protein is UPF0761 membrane protein YihY.